The primary structure comprises 298 residues: MFKENTIKLGIAPIAWTNDDMPELGAENTFEQCISEMALAGFNGSEVGNKYPRNTVVLKKSLELRNLEIASAWFSTFLTTKPIEETVEEFIKHRDFLHDMGAKVIVVSEQGHSIQGLMDVPLFKNKPVFTEEEWDKLADGLHHLGKLAQEKGLHIVYHHHMGTGVQTTAEIEKLMDMTDPELVSLLFDTGHLVFSGEEPLYILKKYLSRIKHVHLKDIRQEVVDIVKENELSFLQAVKNGAFTVPGDGVIGFDKVFTILANSDYKGWFVVEAEQDPALANPFEYALKARKFIQEKAGL.

This sequence belongs to the IolE/MocC family. It depends on glutathione as a cofactor. The cofactor is Co(2+). Mn(2+) serves as cofactor.

The catalysed reaction is scyllo-inosose = 3D-3,5/4-trihydroxycyclohexane-1,2-dione + H2O. It participates in polyol metabolism; myo-inositol degradation into acetyl-CoA; acetyl-CoA from myo-inositol: step 2/7. Its function is as follows. Catalyzes the dehydration of inosose (2-keto-myo-inositol, 2KMI or 2,4,6/3,5-pentahydroxycyclohexanone) to 3D-(3,5/4)-trihydroxycyclohexane-1,2-dione (D-2,3-diketo-4-deoxy-epi-inositol). The protein is Inosose dehydratase of Bacillus cereus (strain AH820).